A 227-amino-acid chain; its full sequence is Probable methylthioribulose-1-phosphate dehydratase (227 aa).

Position 87 (cysteine 87) interacts with substrate. Zn(2+) is bound by residues histidine 105 and histidine 107. The Proton donor/acceptor role is filled by glutamate 129. Histidine 185 contributes to the Zn(2+) binding site.

This sequence belongs to the aldolase class II family. MtnB subfamily. Zn(2+) serves as cofactor.

The protein resides in the cytoplasm. It catalyses the reaction 5-(methylsulfanyl)-D-ribulose 1-phosphate = 5-methylsulfanyl-2,3-dioxopentyl phosphate + H2O. It participates in amino-acid biosynthesis; L-methionine biosynthesis via salvage pathway; L-methionine from S-methyl-5-thio-alpha-D-ribose 1-phosphate: step 2/6. Its function is as follows. Catalyzes the dehydration of methylthioribulose-1-phosphate (MTRu-1-P) into 2,3-diketo-5-methylthiopentyl-1-phosphate (DK-MTP-1-P). The chain is Probable methylthioribulose-1-phosphate dehydratase from Drosophila mojavensis (Fruit fly).